Reading from the N-terminus, the 289-residue chain is Segregation and condensation protein A (289 aa).

Positions 1–18 (MSEDRRSPTDEAPREGEL) are enriched in basic and acidic residues. Residues 1 to 24 (MSEDRRSPTDEAPREGELPRSPGD) form a disordered region.

It belongs to the ScpA family. As to quaternary structure, component of the Structural Maintenance of Chromosome (SMC) condensin-like complex composed of ScpA, ScpB and the Smc homodimer. ScpA and ScpB bind to the head domain of Smc. The presence of the three proteins is required for the association of the complex with DNA.

The protein resides in the cytoplasm. A conditionally essential component of the chromosome segregation machinery. Participates in chromosomal partition during cell division. Important for positioning of ParB-parS complexes (ori of replication) and of the ter replication site, as well as for segration of the ParB-parS complex and thus chromosome segregation. May act via the formation of a condensin-like complex containing Smc, ScpA and ScpB that pulls DNA away from mid-cell into both cell halves. The sequence is that of Segregation and condensation protein A from Myxococcus xanthus (strain DK1622).